The chain runs to 111 residues: UPF0321 protein P20C8.02c (111 aa).

An N-terminal signal peptide occupies residues 1-17; it reads MLLLFCICCVFIKLVLA. Asparagine 20 carries N-linked (GlcNAc...) asparagine glycosylation.

Belongs to the UPF0321 family.

The chain is UPF0321 protein P20C8.02c from Schizosaccharomyces pombe (strain 972 / ATCC 24843) (Fission yeast).